A 598-amino-acid polypeptide reads, in one-letter code: Arginine--tRNA ligase (598 aa).

Positions 131–141 (ANPTGPMHVGH) match the 'HIGH' region motif. The segment at 288 to 308 (KLPPPKSKKGQPPAQPQPDEE) is disordered.

Belongs to the class-I aminoacyl-tRNA synthetase family. In terms of assembly, monomer.

Its subcellular location is the cytoplasm. The enzyme catalyses tRNA(Arg) + L-arginine + ATP = L-arginyl-tRNA(Arg) + AMP + diphosphate. This chain is Arginine--tRNA ligase, found in Anaeromyxobacter sp. (strain K).